The sequence spans 383 residues: Putative glutamate--cysteine ligase 2 (383 aa).

It belongs to the glutamate--cysteine ligase type 2 family. YbdK subfamily.

It carries out the reaction L-cysteine + L-glutamate + ATP = gamma-L-glutamyl-L-cysteine + ADP + phosphate + H(+). Functionally, ATP-dependent carboxylate-amine ligase which exhibits weak glutamate--cysteine ligase activity. The protein is Putative glutamate--cysteine ligase 2 of Clavibacter michiganensis subsp. michiganensis (strain NCPPB 382).